A 58-amino-acid polypeptide reads, in one-letter code: Large ribosomal subunit protein bL32 (58 aa).

Over residues 1–19 (MAVPKKRTSKSKKNMRKAN) the composition is skewed to basic residues. Residues 1–58 (MAVPKKRTSKSKKNMRKANWKNQAKLAAKKALSLGKSVETQRSHSFVHPRYEEEEEED) are disordered. The span at 20 to 32 (WKNQAKLAAKKAL) shows a compositional bias: low complexity.

Belongs to the bacterial ribosomal protein bL32 family.

In Trichodesmium erythraeum (strain IMS101), this protein is Large ribosomal subunit protein bL32.